A 180-amino-acid polypeptide reads, in one-letter code: Large ribosomal subunit protein uL6 (180 aa).

Belongs to the universal ribosomal protein uL6 family. As to quaternary structure, part of the 50S ribosomal subunit.

Functionally, this protein binds to the 23S rRNA, and is important in its secondary structure. It is located near the subunit interface in the base of the L7/L12 stalk, and near the tRNA binding site of the peptidyltransferase center. This Anaeromyxobacter sp. (strain Fw109-5) protein is Large ribosomal subunit protein uL6.